A 629-amino-acid chain; its full sequence is Probable potassium transport system protein Kup 3 (629 aa).

A run of 12 helical transmembrane segments spans residues 20 to 40, 54 to 74, 106 to 126, 143 to 163, 171 to 191, 212 to 232, 253 to 273, 291 to 311, 343 to 363, 372 to 392, 400 to 420, and 425 to 445; these read LSLSALGIVYGDIGTSPLYTF, VTTIMGSASLIIWTLIIIASV, PFIIAVGLMGAALIYGDGTIT, PSLKYYVLPIAITILITLFAI, IGKAFGPVMAFWFLTIGILGA, FLFSNGATGFFILCGVFLCVT, WFGLAFPSLIFNYLGQAALVL, FLLPLIILSTVATIIASQAII, IYIGVVNWLLMLATLGLIIGF, AYGIAVSATMLCTSVLLFIAL, IIKSGLVAGLFMIVDASFFAA, and FINGGYIPITLAIIIYSMMYI.

Belongs to the HAK/KUP transporter (TC 2.A.72) family.

It localises to the cell inner membrane. It catalyses the reaction K(+)(in) + H(+)(in) = K(+)(out) + H(+)(out). Functionally, transport of potassium into the cell. Likely operates as a K(+):H(+) symporter. In Legionella pneumophila (strain Corby), this protein is Probable potassium transport system protein Kup 3.